Here is a 663-residue protein sequence, read N- to C-terminus: UvrABC system protein B (663 aa).

Residues 1–10 (MIDKRDDKPF) are compositionally biased toward basic and acidic residues. Residues 1 to 23 (MIDKRDDKPFKLKSKYKPSGDQP) are disordered. Residues 31-271 (DNIEGGEKAQ…EQSIAKIQAE (241 aa)) form the Helicase ATP-binding domain. An ATP-binding site is contributed by 44–51 (GATGTGKT). Positions 97–120 (YYDYYQPEAYVPSSDTYIEKDSSV) match the Beta-hairpin motif. One can recognise a Helicase C-terminal domain in the interval 435-601 (QMDDLLGEIN…TIKKDIRGLI (167 aa)). One can recognise a UVR domain in the interval 627–662 (KEAINALQKQMQEAAELLDFELAAQMRDLILELKLM).

This sequence belongs to the UvrB family. In terms of assembly, forms a heterotetramer with UvrA during the search for lesions. Interacts with UvrC in an incision complex.

It localises to the cytoplasm. In terms of biological role, the UvrABC repair system catalyzes the recognition and processing of DNA lesions. A damage recognition complex composed of 2 UvrA and 2 UvrB subunits scans DNA for abnormalities. Upon binding of the UvrA(2)B(2) complex to a putative damaged site, the DNA wraps around one UvrB monomer. DNA wrap is dependent on ATP binding by UvrB and probably causes local melting of the DNA helix, facilitating insertion of UvrB beta-hairpin between the DNA strands. Then UvrB probes one DNA strand for the presence of a lesion. If a lesion is found the UvrA subunits dissociate and the UvrB-DNA preincision complex is formed. This complex is subsequently bound by UvrC and the second UvrB is released. If no lesion is found, the DNA wraps around the other UvrB subunit that will check the other stand for damage. The protein is UvrABC system protein B of Streptococcus pyogenes serotype M4 (strain MGAS10750).